A 168-amino-acid chain; its full sequence is Probable acetolactate synthase small subunit (168 aa).

The region spanning 10 to 84 (IISALVEHKP…DVIKVRDLEP (75 aa)) is the ACT domain.

It belongs to the acetolactate synthase small subunit family. Dimer of large and small chains.

The enzyme catalyses 2 pyruvate + H(+) = (2S)-2-acetolactate + CO2. Its pathway is amino-acid biosynthesis; L-isoleucine biosynthesis; L-isoleucine from 2-oxobutanoate: step 1/4. It participates in amino-acid biosynthesis; L-valine biosynthesis; L-valine from pyruvate: step 1/4. In Methanothermobacter thermautotrophicus (strain ATCC 29096 / DSM 1053 / JCM 10044 / NBRC 100330 / Delta H) (Methanobacterium thermoautotrophicum), this protein is Probable acetolactate synthase small subunit (ilvH).